We begin with the raw amino-acid sequence, 427 residues long: 3-isopropylmalate dehydratase large subunit (427 aa).

Residues Cys308, Cys368, and Cys371 each contribute to the [4Fe-4S] cluster site.

This sequence belongs to the aconitase/IPM isomerase family. LeuC type 2 subfamily. In terms of assembly, heterodimer of LeuC and LeuD. [4Fe-4S] cluster is required as a cofactor.

The catalysed reaction is (2R,3S)-3-isopropylmalate = (2S)-2-isopropylmalate. The protein operates within amino-acid biosynthesis; L-leucine biosynthesis; L-leucine from 3-methyl-2-oxobutanoate: step 2/4. Functionally, catalyzes the isomerization between 2-isopropylmalate and 3-isopropylmalate, via the formation of 2-isopropylmaleate. The protein is 3-isopropylmalate dehydratase large subunit of Geobacter sulfurreducens (strain ATCC 51573 / DSM 12127 / PCA).